A 149-amino-acid chain; its full sequence is Oocyte-expressed protein homolog (149 aa).

The interval 1–22 (MVDDAGAAESQRGKQTPAHSLE) is disordered. Positions 49–110 (PLVFYLEAWL…RVQNRVKSML (62 aa)) constitute a KH; atypical domain.

Belongs to the KHDC1 family. Component of the subcortical maternal complex (SCMC), at least composed of NLRP5, KHDC3L, OOEP, and TLE6 isoform 1. Within the complex, interacts with NLRP5, KHDC3L and TLE6 isoform 1. As part of the SCMC interacts with the SCMC-associated protein NLRP4F. The SCMC may facilitate translocation of its components between the nuclear and cytoplasmic compartments. Forms a scaffold complex with KHDC3L/FILIA, and interacts with BLM and TRIM25 at DNA replication forks.

The protein localises to the cytoplasm. The protein resides in the nucleus. Its function is as follows. Component of the subcortical maternal complex (SCMC), a multiprotein complex that plays a key role in early embryonic development. The SCMC complex is a structural constituent of cytoplasmic lattices, which consist in fibrous structures found in the cytoplasm of oocytes and preimplantation embryos. They are required to store maternal proteins critical for embryonic development, such as proteins that control epigenetic reprogramming of the preimplantation embryo, and prevent their degradation or activation. As part of the OOEP-KHDC3 scaffold, recruits BLM and TRIM25 to DNA replication forks, thereby promoting the ubiquitination of BLM by TRIM25, enhancing BLM retainment at replication forks and therefore promoting stalled replication fork restart. Positively regulates the homologous recombination-mediated DNA double-strand break (DSB) repair pathway by regulating ATM activation and RAD51 recruitment to DSBs in oocytes. Thereby contributes to oocyte survival and the resumption and completion of meiosis. The sequence is that of Oocyte-expressed protein homolog from Homo sapiens (Human).